A 200-amino-acid chain; its full sequence is Large ribosomal subunit protein uL4 (200 aa).

The segment at 38–68 (GRQGSKQQKTRSDVRGGGKRPWRQKGTGRAR) is disordered. The span at 54–65 (GGKRPWRQKGTG) shows a compositional bias: basic residues.

This sequence belongs to the universal ribosomal protein uL4 family. In terms of assembly, part of the 50S ribosomal subunit.

Its function is as follows. One of the primary rRNA binding proteins, this protein initially binds near the 5'-end of the 23S rRNA. It is important during the early stages of 50S assembly. It makes multiple contacts with different domains of the 23S rRNA in the assembled 50S subunit and ribosome. In terms of biological role, forms part of the polypeptide exit tunnel. In Pseudomonas fluorescens (strain SBW25), this protein is Large ribosomal subunit protein uL4.